The primary structure comprises 211 residues: Histidine biosynthesis bifunctional protein HisIE (211 aa).

Positions 1–122 are phosphoribosyl-AMP cyclohydrolase; the sequence is MSVKAAEVSS…DPQEESQMVW (122 aa). The phosphoribosyl-ATP pyrophosphohydrolase stretch occupies residues 123–211; that stretch reads LHQLEQLLAA…VINKLKERHK (89 aa).

In the N-terminal section; belongs to the PRA-CH family. The protein in the C-terminal section; belongs to the PRA-PH family.

It is found in the cytoplasm. The enzyme catalyses 1-(5-phospho-beta-D-ribosyl)-ATP + H2O = 1-(5-phospho-beta-D-ribosyl)-5'-AMP + diphosphate + H(+). The catalysed reaction is 1-(5-phospho-beta-D-ribosyl)-5'-AMP + H2O = 1-(5-phospho-beta-D-ribosyl)-5-[(5-phospho-beta-D-ribosylamino)methylideneamino]imidazole-4-carboxamide. It participates in amino-acid biosynthesis; L-histidine biosynthesis; L-histidine from 5-phospho-alpha-D-ribose 1-diphosphate: step 2/9. It functions in the pathway amino-acid biosynthesis; L-histidine biosynthesis; L-histidine from 5-phospho-alpha-D-ribose 1-diphosphate: step 3/9. This is Histidine biosynthesis bifunctional protein HisIE from Vibrio vulnificus (strain YJ016).